Reading from the N-terminus, the 295-residue chain is UDP-N-acetylenolpyruvoylglucosamine reductase (295 aa).

The FAD-binding PCMH-type domain maps to 25–189 (RVGGPADLFA…LEALFRLDQR (165 aa)). Arg-169 is an active-site residue. The Proton donor role is filled by Ser-218. Glu-288 is an active-site residue.

Belongs to the MurB family. It depends on FAD as a cofactor.

Its subcellular location is the cytoplasm. The catalysed reaction is UDP-N-acetyl-alpha-D-muramate + NADP(+) = UDP-N-acetyl-3-O-(1-carboxyvinyl)-alpha-D-glucosamine + NADPH + H(+). Its pathway is cell wall biogenesis; peptidoglycan biosynthesis. In terms of biological role, cell wall formation. In Pelobacter propionicus (strain DSM 2379 / NBRC 103807 / OttBd1), this protein is UDP-N-acetylenolpyruvoylglucosamine reductase.